The sequence spans 112 residues: Ig kappa chain V-II region 2S1.3 (112 aa).

The tract at residues 1–23 (DIVMTQAAFSNPVTLGTSASFSC) is framework-1. An intrachain disulfide couples C23 to C93. The tract at residues 24–39 (RSSKSLQQSKGITYLY) is complementarity-determining-1. The interval 40 to 54 (WYLQKPGQSPQLLIY) is framework-2. Residues 55 to 61 (QMSNLAS) are complementarity-determining-2. The framework-3 stretch occupies residues 62-93 (GVPDRFSGSGSGTDFTLRISRVEAEDVGVYYC). The interval 94–102 (ANLQELPYT) is complementarity-determining-3. The segment at 103 to 112 (FGGGTKLEIK) is framework-4.

The chain is Ig kappa chain V-II region 2S1.3 from Mus musculus (Mouse).